Reading from the N-terminus, the 248-residue chain is ATP synthase subunit a (248 aa).

The next 5 helical transmembrane spans lie at 31-51, 90-110, 129-149, 195-215, and 216-236; these read GQVLIASWIAIALILTVVLLG, VPYVGTLFLFIFVSNWMGNLF, INTTAGLALLTSVMYFVAGIS, VIAVLVLLVPLLIPVPVMILF, and LFTGAIQALIFSTLSAAYIGE.

It belongs to the ATPase A chain family. In terms of assembly, F-type ATPases have 2 components, CF(1) - the catalytic core - and CF(0) - the membrane proton channel. CF(1) has five subunits: alpha(3), beta(3), gamma(1), delta(1), epsilon(1). CF(0) has four main subunits: a, b, b' and c.

It localises to the cellular thylakoid membrane. Its function is as follows. Key component of the proton channel; it plays a direct role in the translocation of protons across the membrane. The protein is ATP synthase subunit a of Synechococcus sp. (strain JA-3-3Ab) (Cyanobacteria bacterium Yellowstone A-Prime).